The primary structure comprises 66 residues: Conotoxin Cl14.1b (66 aa).

The signal sequence occupies residues 1–19 (MNVTVMFLVLLLTMPLTDG). The propeptide occupies 20–47 (FNIRAINGGELFGLVQRDAGNALDHGFY).

It belongs to the conotoxin L superfamily. Contains 2 disulfide bonds. In terms of tissue distribution, expressed by the venom duct.

The protein localises to the secreted. This is Conotoxin Cl14.1b from Californiconus californicus (California cone).